Reading from the N-terminus, the 262-residue chain is Polyamine aminopropyltransferase (262 aa).

The 249-residue stretch at 1–249 (MWITQEITPY…DIHRAAFALP (249 aa)) folds into the PABS domain. Residue N29 coordinates S-methyl-5'-thioadenosine. Spermidine is bound at residue D83. Catalysis depends on D155, which acts as the Proton acceptor.

The protein belongs to the spermidine/spermine synthase family. Homodimer or homotetramer.

The protein localises to the cytoplasm. The catalysed reaction is S-adenosyl 3-(methylsulfanyl)propylamine + putrescine = S-methyl-5'-thioadenosine + spermidine + H(+). It participates in amine and polyamine biosynthesis; spermidine biosynthesis; spermidine from putrescine: step 1/1. Functionally, catalyzes the irreversible transfer of a propylamine group from the amino donor S-adenosylmethioninamine (decarboxy-AdoMet) to putrescine (1,4-diaminobutane) to yield spermidine. The polypeptide is Polyamine aminopropyltransferase (Helicobacter pylori (strain G27)).